The sequence spans 292 residues: Acetylglutamate kinase (292 aa).

Residues Gly-64–Gly-65, Arg-86, and Asn-190 each bind substrate.

Belongs to the acetylglutamate kinase family. ArgB subfamily.

Its subcellular location is the cytoplasm. It catalyses the reaction N-acetyl-L-glutamate + ATP = N-acetyl-L-glutamyl 5-phosphate + ADP. It participates in amino-acid biosynthesis; L-arginine biosynthesis; N(2)-acetyl-L-ornithine from L-glutamate: step 2/4. Functionally, catalyzes the ATP-dependent phosphorylation of N-acetyl-L-glutamate. This chain is Acetylglutamate kinase, found in Geotalea daltonii (strain DSM 22248 / JCM 15807 / FRC-32) (Geobacter daltonii).